Consider the following 168-residue polypeptide: G/U mismatch-specific DNA glycosylase (168 aa).

The protein belongs to the uracil-DNA glycosylase (UDG) superfamily. TDG/mug family. In terms of assembly, binds DNA as a monomer.

The protein localises to the cytoplasm. It carries out the reaction Specifically hydrolyzes mismatched double-stranded DNA and polynucleotides, releasing free uracil.. Functionally, excises ethenocytosine and uracil, which can arise by alkylation or deamination of cytosine, respectively, from the corresponding mispairs with guanine in ds-DNA. It is capable of hydrolyzing the carbon-nitrogen bond between the sugar-phosphate backbone of the DNA and the mispaired base. The complementary strand guanine functions in substrate recognition. Required for DNA damage lesion repair in stationary-phase cells. The sequence is that of G/U mismatch-specific DNA glycosylase from Escherichia coli O157:H7 (strain EC4115 / EHEC).